A 365-amino-acid polypeptide reads, in one-letter code: Phospho-N-acetylmuramoyl-pentapeptide-transferase (365 aa).

10 helical membrane-spanning segments follow: residues 19–39, 49–69, 92–112, 116–136, 156–176, 183–203, 215–235, 238–258, 279–299, and 345–365; these read TLLI…SSWA, LLIA…AVVP, AGTP…IAVV, FNPD…IGWV, LFLQ…YGPT, IMQF…FALV, VDGL…LLVA, NPAL…FVHH, LAAV…SGIF, and QIVG…MATA.

The protein belongs to the glycosyltransferase 4 family. MraY subfamily. Requires Mg(2+) as cofactor.

The protein resides in the cell inner membrane. It catalyses the reaction UDP-N-acetyl-alpha-D-muramoyl-L-alanyl-gamma-D-glutamyl-meso-2,6-diaminopimeloyl-D-alanyl-D-alanine + di-trans,octa-cis-undecaprenyl phosphate = di-trans,octa-cis-undecaprenyl diphospho-N-acetyl-alpha-D-muramoyl-L-alanyl-D-glutamyl-meso-2,6-diaminopimeloyl-D-alanyl-D-alanine + UMP. It participates in cell wall biogenesis; peptidoglycan biosynthesis. Its function is as follows. Catalyzes the initial step of the lipid cycle reactions in the biosynthesis of the cell wall peptidoglycan: transfers peptidoglycan precursor phospho-MurNAc-pentapeptide from UDP-MurNAc-pentapeptide onto the lipid carrier undecaprenyl phosphate, yielding undecaprenyl-pyrophosphoryl-MurNAc-pentapeptide, known as lipid I. This chain is Phospho-N-acetylmuramoyl-pentapeptide-transferase, found in Synechocystis sp. (strain ATCC 27184 / PCC 6803 / Kazusa).